The sequence spans 192 residues: uncharacterized protein (192 aa).

A signal peptide spans 1 to 17; the sequence is MFKKILFPLVALFMLAG. A lipid anchor (N-palmitoyl cysteine) is attached at Cys18. Cys18 carries the S-diacylglycerol cysteine lipid modification.

This sequence to H.influenzae HI_0162.

It localises to the cell membrane. This is an uncharacterized protein from Escherichia coli O6:H1 (strain CFT073 / ATCC 700928 / UPEC).